The chain runs to 289 residues: Glucosamine-6-phosphate deaminase 1 (289 aa).

Residue lysine 64 is modified to N6-acetyllysine. The Proton acceptor; for enolization step role is filled by aspartate 72. Aspartate 141 functions as the For ring-opening step in the catalytic mechanism. Histidine 143 serves as the catalytic Proton acceptor; for ring-opening step. Glutamate 148 serves as the catalytic For ring-opening step. Threonine 161 carries the post-translational modification Phosphothreonine.

Belongs to the glucosamine/galactosamine-6-phosphate isomerase family. Homohexamer.

The protein localises to the cytoplasm. It carries out the reaction alpha-D-glucosamine 6-phosphate + H2O = beta-D-fructose 6-phosphate + NH4(+). The protein operates within nucleotide-sugar biosynthesis; UDP-N-acetyl-alpha-D-glucosamine biosynthesis; alpha-D-glucosamine 6-phosphate from D-fructose 6-phosphate: step 1/1. Its activity is regulated as follows. Allosterically activated by N-acetylglucosamine-6-phosphate (GlcNAc6P). Its function is as follows. Catalyzes the reversible conversion of alpha-D-glucosamine 6-phosphate (GlcN-6P) into beta-D-fructose 6-phosphate (Fru-6P) and ammonium ion, a regulatory reaction step in de novo uridine diphosphate-N-acetyl-alpha-D-glucosamine (UDP-GlcNAc) biosynthesis via hexosamine pathway. Deamination is coupled to aldo-keto isomerization mediating the metabolic flux from UDP-GlcNAc toward Fru-6P. At high ammonium level can drive amination and isomerization of Fru-6P toward hexosamines and UDP-GlcNAc synthesis. Has a role in fine tuning the metabolic fluctuations of cytosolic UDP-GlcNAc and their effects on hyaluronan synthesis that occur during tissue remodeling. Seems to trigger calcium oscillations in mammalian eggs. These oscillations serve as the essential trigger for egg activation and early development of the embryo. This Homo sapiens (Human) protein is Glucosamine-6-phosphate deaminase 1.